A 305-amino-acid polypeptide reads, in one-letter code: Acetaldehyde dehydrogenase (305 aa).

12–15 (SGNI) contacts NAD(+). The active-site Acyl-thioester intermediate is Cys-127. NAD(+) is bound by residues 158-166 (SAGPGTRAN) and Asn-277.

This sequence belongs to the acetaldehyde dehydrogenase family.

It carries out the reaction acetaldehyde + NAD(+) + CoA = acetyl-CoA + NADH + H(+). The protein is Acetaldehyde dehydrogenase of Mycolicibacterium paratuberculosis (strain ATCC BAA-968 / K-10) (Mycobacterium paratuberculosis).